The chain runs to 940 residues: Gamma-aminobutyric acid type B receptor subunit 2 (940 aa).

Residues 1-40 (MASPPSSGQPRPPPPPPPPARLLLPLLLSLLLSLAPGAWG) form the signal peptide. The Extracellular segment spans residues 41 to 482 (WARGAPRPPP…LRKISLPLYS (442 aa)). The N-linked (GlcNAc...) asparagine glycan is linked to Asn89. Disulfide bonds link Cys107/Cys134, Cys236/Cys265, and Cys264/Cys301. Asn297, Asn388, Asn403, and Asn452 each carry an N-linked (GlcNAc...) asparagine glycan. A helical membrane pass occupies residues 483-503 (ILSALTILGMIMASAFLFFNI). The Cytoplasmic segment spans residues 504–521 (KNRNQKLIKMSSPYMNNL). Residues 522-542 (IILGGMLSYASIFLFGLDGSF) form a helical membrane-spanning segment. Over 543 to 550 (VSEKTFET) the chain is Extracellular. Residues 551 to 571 (LCTVRTWILTVGYTTAFGAMF) form a helical membrane-spanning segment. Residues 572 to 596 (AKTWRVHAIFKNVKMKKKIIKDQKL) are Cytoplasmic-facing. The chain crosses the membrane as a helical span at residues 597 to 617 (LVIVGGMLLIDLCILICWQAV). At 618 to 653 (DPLRRTVERYSMEPDPAGRDISIRPLLEHCENTHMT) the chain is on the extracellular side. A helical membrane pass occupies residues 654-674 (IWLGIVYAYKGLLMLFGCFLA). Residues 675 to 690 (WETRNVSIPALNDSKY) lie on the Cytoplasmic side of the membrane. Residues 691 to 711 (IGMSVYNVGIMCIIGAAVSFL) traverse the membrane as a helical segment. Residues 712–719 (TRDQPNVQ) are Extracellular-facing. The helical transmembrane segment at 720–740 (FCIVALVIIFCSTITLCLVFV) threads the bilayer. Over 741–940 (PKLITLRTNP…PSFRVMVSGL (200 aa)) the chain is Cytoplasmic. A disordered region spans residues 762 to 789 (TQNQKKEDSKTSTSVTSVNQASTSRLEG). Positions 772–786 (TSTSVTSVNQASTSR) are enriched in polar residues. A phosphoserine mark is found at Ser775 and Ser778. A coiled-coil region spans residues 781 to 818 (QASTSRLEGLQSENHRLRMKITELDKDLEEVTMQLQDT). Thr818 is modified (phosphothreonine). Phosphoserine is present on residues Ser883, Ser892, Ser912, Ser915, Ser919, and Ser923.

The protein belongs to the G-protein coupled receptor 3 family. GABA-B receptor subfamily. As to quaternary structure, heterodimer of GABBR1 and GABBR2. Homodimers may form, but are inactive. Interacts (via C-terminus) with ATF4 (via leucine zipper domain).

Its subcellular location is the cell membrane. The protein resides in the postsynaptic cell membrane. Functionally, component of a heterodimeric G-protein coupled receptor for GABA, formed by GABBR1 and GABBR2. Within the heterodimeric GABA receptor, only GABBR1 seems to bind agonists, while GABBR2 mediates coupling to G proteins. Ligand binding causes a conformation change that triggers signaling via guanine nucleotide-binding proteins (G proteins) and modulates the activity of down-stream effectors, such as adenylate cyclase. Signaling inhibits adenylate cyclase, stimulates phospholipase A2, activates potassium channels, inactivates voltage-dependent calcium-channels and modulates inositol phospholipid hydrolysis. Plays a critical role in the fine-tuning of inhibitory synaptic transmission. Pre-synaptic GABA receptor inhibits neurotransmitter release by down-regulating high-voltage activated calcium channels, whereas postsynaptic GABA receptor decreases neuronal excitability by activating a prominent inwardly rectifying potassium (Kir) conductance that underlies the late inhibitory postsynaptic potentials. Not only implicated in synaptic inhibition but also in hippocampal long-term potentiation, slow wave sleep, muscle relaxation and antinociception. Interacts with KCTD8, KCTD12 and KCTD16; this interaction determines the pharmacology and kinetics of the receptor response, the KCTD proteins markedly accelerating the GABA-B response, although to different extents. The protein is Gamma-aminobutyric acid type B receptor subunit 2 (Gabbr2) of Mus musculus (Mouse).